Consider the following 432-residue polypeptide: Lecithin-cholesterol acyltransferase-like 1 (432 aa).

The helical transmembrane segment at 7-29 threads the bilayer; it reads HYSVVIAILVVVTMTSMCQAVGS. Ser209 functions as the Acyl-ester intermediate in the catalytic mechanism. Catalysis depends on charge relay system residues Asp374 and His400.

Belongs to the AB hydrolase superfamily. Lipase family.

The protein resides in the membrane. The sequence is that of Lecithin-cholesterol acyltransferase-like 1 (LCAT1) from Arabidopsis thaliana (Mouse-ear cress).